We begin with the raw amino-acid sequence, 155 residues long: Probable methanogenesis regulatory protein FilR2 (155 aa).

The Response regulatory domain occupies 18 to 142; that stretch reads IILLVEDNNA…DLKRTVEEIK (125 aa). Aspartate 75 carries the post-translational modification 4-aspartylphosphate.

Phosphorylated by FilI.

Member of the two-component regulatory system FilI/FilRs, which is involved in the regulation of methanogenesis. The chain is Probable methanogenesis regulatory protein FilR2 from Methanothrix harundinacea (strain 6Ac) (Methanosaeta harundinacea).